The primary structure comprises 267 residues: Translation initiation factor 2 subunit alpha (267 aa).

One can recognise an S1 motif domain in the interval glycine 12–lysine 83.

It belongs to the eIF-2-alpha family. As to quaternary structure, heterotrimer composed of an alpha, a beta and a gamma chain.

Its function is as follows. eIF-2 functions in the early steps of protein synthesis by forming a ternary complex with GTP and initiator tRNA. This chain is Translation initiation factor 2 subunit alpha, found in Hyperthermus butylicus (strain DSM 5456 / JCM 9403 / PLM1-5).